A 363-amino-acid chain; its full sequence is S-adenosylmethionine:tRNA ribosyltransferase-isomerase (363 aa).

It belongs to the QueA family. Monomer.

The protein resides in the cytoplasm. It catalyses the reaction 7-aminomethyl-7-carbaguanosine(34) in tRNA + S-adenosyl-L-methionine = epoxyqueuosine(34) in tRNA + adenine + L-methionine + 2 H(+). Its pathway is tRNA modification; tRNA-queuosine biosynthesis. Its function is as follows. Transfers and isomerizes the ribose moiety from AdoMet to the 7-aminomethyl group of 7-deazaguanine (preQ1-tRNA) to give epoxyqueuosine (oQ-tRNA). The protein is S-adenosylmethionine:tRNA ribosyltransferase-isomerase of Synechococcus sp. (strain RCC307).